A 551-amino-acid chain; its full sequence is Probable 4-coumarate--CoA ligase 3 (551 aa).

The ATP site is built by Ser-205, Ser-206, Gly-207, Thr-208, Thr-209, and Lys-213. Phe-253 serves as a coordination point for (E)-4-coumaroyl-AMP. Lys-274 is a CoA binding site. Residues Glu-276 to Gln-346 are SBD1. Ala-323, Gln-346, Gly-347, and Thr-351 together coordinate (E)-4-coumaroyl-AMP. The ATP site is built by Gln-346, Gly-347, Thr-351, Asp-430, and Arg-445. Residues Gly-347–Tyr-409 are SBD2. The (E)-4-coumaroyl-AMP site is built by Lys-447 and Lys-451. The CoA site is built by Lys-453 and Gly-454. Lys-537 serves as a coordination point for ATP.

This sequence belongs to the ATP-dependent AMP-binding enzyme family. The cofactor is Mg(2+).

The catalysed reaction is (E)-4-coumarate + ATP + CoA = (E)-4-coumaroyl-CoA + AMP + diphosphate. It catalyses the reaction (E)-4-coumarate + ATP + H(+) = (E)-4-coumaroyl-AMP + diphosphate. It carries out the reaction (E)-4-coumaroyl-AMP + CoA = (E)-4-coumaroyl-CoA + AMP + H(+). It participates in phytoalexin biosynthesis; 3,4',5-trihydroxystilbene biosynthesis; 3,4',5-trihydroxystilbene from trans-4-coumarate: step 1/2. In terms of biological role, carboxylate--CoA ligase that may use 4-coumarate as substrate. Follows a two-step reaction mechanism, wherein the carboxylate substrate first undergoes adenylation by ATP, followed by a thioesterification in the presence of CoA to yield the final CoA thioester. The polypeptide is Probable 4-coumarate--CoA ligase 3 (4cl3) (Dictyostelium discoideum (Social amoeba)).